The sequence spans 467 residues: Argininosuccinate lyase (467 aa).

Belongs to the lyase 1 family. Argininosuccinate lyase subfamily.

The protein resides in the cytoplasm. It carries out the reaction 2-(N(omega)-L-arginino)succinate = fumarate + L-arginine. It functions in the pathway amino-acid biosynthesis; L-arginine biosynthesis; L-arginine from L-ornithine and carbamoyl phosphate: step 3/3. In Methylibium petroleiphilum (strain ATCC BAA-1232 / LMG 22953 / PM1), this protein is Argininosuccinate lyase.